The primary structure comprises 427 residues: Enolase (427 aa).

Position 163 (Q163) interacts with (2R)-2-phosphoglycerate. The active-site Proton donor is E205. The Mg(2+) site is built by D242, E285, and D312. The (2R)-2-phosphoglycerate site is built by K337, R366, S367, and K388. K337 functions as the Proton acceptor in the catalytic mechanism.

Belongs to the enolase family. Requires Mg(2+) as cofactor.

Its subcellular location is the cytoplasm. The protein resides in the secreted. It is found in the cell surface. The enzyme catalyses (2R)-2-phosphoglycerate = phosphoenolpyruvate + H2O. Its pathway is carbohydrate degradation; glycolysis; pyruvate from D-glyceraldehyde 3-phosphate: step 4/5. Functionally, catalyzes the reversible conversion of 2-phosphoglycerate (2-PG) into phosphoenolpyruvate (PEP). It is essential for the degradation of carbohydrates via glycolysis. The sequence is that of Enolase from Rhodopseudomonas palustris (strain ATCC BAA-98 / CGA009).